The sequence spans 517 residues: Probable protein phosphatase 2C 20 (517 aa).

A disordered region spans residues 1-59 (MWVMQGERRRARAPWGPPDTGGALLERWISRERRSDSRDASGSAKQRSAMGNSLPVESK). Basic and acidic residues predominate over residues 28-39 (WISRERRSDSRD). Residues 70 to 373 (KYVVSSMQGW…DNTTVILVLF (304 aa)) enclose the PPM-type phosphatase domain. Positions 105, 106, 323, and 364 each coordinate Mn(2+). Positions 380 to 517 (AVPPVDTDTD…PPHDDTYHRW (138 aa)) are disordered. A compositionally biased stretch (polar residues) spans 402 to 414 (GSNNATASDNNDP). The span at 438-455 (DATATAVGSSSTTAVAAD) shows a compositional bias: low complexity. The span at 499–517 (LPRSNPDKSPPHDDTYHRW) shows a compositional bias: basic and acidic residues.

This sequence belongs to the PP2C family. It depends on Mg(2+) as a cofactor. Mn(2+) is required as a cofactor.

The enzyme catalyses O-phospho-L-seryl-[protein] + H2O = L-seryl-[protein] + phosphate. The catalysed reaction is O-phospho-L-threonyl-[protein] + H2O = L-threonyl-[protein] + phosphate. In Oryza sativa subsp. japonica (Rice), this protein is Probable protein phosphatase 2C 20.